The sequence spans 445 residues: Eukaryotic translation initiation factor 3 subunit E (445 aa).

The 174-residue stretch at phenylalanine 230–leucine 403 folds into the PCI domain.

This sequence belongs to the eIF-3 subunit E family. Component of the eukaryotic translation initiation factor 3 (eIF-3) complex.

It is found in the cytoplasm. Functionally, component of the eukaryotic translation initiation factor 3 (eIF-3) complex, which is involved in protein synthesis of a specialized repertoire of mRNAs and, together with other initiation factors, stimulates binding of mRNA and methionyl-tRNAi to the 40S ribosome. The eIF-3 complex specifically targets and initiates translation of a subset of mRNAs involved in cell proliferation. This Bombyx mori (Silk moth) protein is Eukaryotic translation initiation factor 3 subunit E (eIF3-S6).